The chain runs to 240 residues: Uridylate kinase (240 aa).

ATP contacts are provided by residues 15-18, G58, and R62; that span reads KISG. UMP-binding positions include D77 and 138 to 145; that span reads TGNPLFTT. Residues T165, Y171, and D174 each coordinate ATP.

It belongs to the UMP kinase family. As to quaternary structure, homohexamer.

Its subcellular location is the cytoplasm. It carries out the reaction UMP + ATP = UDP + ADP. It functions in the pathway pyrimidine metabolism; CTP biosynthesis via de novo pathway; UDP from UMP (UMPK route): step 1/1. Inhibited by UTP. In terms of biological role, catalyzes the reversible phosphorylation of UMP to UDP. This chain is Uridylate kinase, found in Buchnera aphidicola subsp. Schizaphis graminum (strain Sg).